Here is a 433-residue protein sequence, read N- to C-terminus: Histidinol dehydrogenase (433 aa).

NAD(+) contacts are provided by Tyr129, Gln191, and Asn214. Substrate is bound by residues Ser237, Gln259, and His262. Positions 259 and 262 each coordinate Zn(2+). Catalysis depends on proton acceptor residues Glu326 and His327. Residues His327, Asp360, Glu414, and His419 each coordinate substrate. Zn(2+) is bound at residue Asp360. His419 contributes to the Zn(2+) binding site.

The protein belongs to the histidinol dehydrogenase family. Requires Zn(2+) as cofactor.

It catalyses the reaction L-histidinol + 2 NAD(+) + H2O = L-histidine + 2 NADH + 3 H(+). The protein operates within amino-acid biosynthesis; L-histidine biosynthesis; L-histidine from 5-phospho-alpha-D-ribose 1-diphosphate: step 9/9. Functionally, catalyzes the sequential NAD-dependent oxidations of L-histidinol to L-histidinaldehyde and then to L-histidine. This chain is Histidinol dehydrogenase, found in Methanosarcina barkeri (strain Fusaro / DSM 804).